We begin with the raw amino-acid sequence, 192 residues long: Ribonuclease HII (192 aa).

The RNase H type-2 domain maps to Lys-2 to Val-187. Residues Asp-8, Glu-9, and Asp-97 each coordinate a divalent metal cation.

It belongs to the RNase HII family. The cofactor is Mn(2+). It depends on Mg(2+) as a cofactor.

It is found in the cytoplasm. It catalyses the reaction Endonucleolytic cleavage to 5'-phosphomonoester.. Endonuclease that specifically degrades the RNA of RNA-DNA hybrids. The protein is Ribonuclease HII of Aliarcobacter butzleri (strain RM4018) (Arcobacter butzleri).